The following is a 416-amino-acid chain: Serine hydroxymethyltransferase 1 (416 aa).

(6S)-5,6,7,8-tetrahydrofolate contacts are provided by residues Leu121 and 125 to 127 (GHL). An N6-(pyridoxal phosphate)lysine modification is found at Lys229. Residues Glu245 and 354 to 356 (SPF) contribute to the (6S)-5,6,7,8-tetrahydrofolate site.

It belongs to the SHMT family. In terms of assembly, homodimer. Pyridoxal 5'-phosphate is required as a cofactor.

The protein localises to the cytoplasm. It catalyses the reaction (6R)-5,10-methylene-5,6,7,8-tetrahydrofolate + glycine + H2O = (6S)-5,6,7,8-tetrahydrofolate + L-serine. The protein operates within one-carbon metabolism; tetrahydrofolate interconversion. It participates in amino-acid biosynthesis; glycine biosynthesis; glycine from L-serine: step 1/1. Functionally, catalyzes the reversible interconversion of serine and glycine with tetrahydrofolate (THF) serving as the one-carbon carrier. This reaction serves as the major source of one-carbon groups required for the biosynthesis of purines, thymidylate, methionine, and other important biomolecules. Also exhibits THF-independent aldolase activity toward beta-hydroxyamino acids, producing glycine and aldehydes, via a retro-aldol mechanism. The chain is Serine hydroxymethyltransferase 1 from Vibrio cholerae serotype O1 (strain ATCC 39315 / El Tor Inaba N16961).